The following is an 80-amino-acid chain: Myocilin opposite strand protein (80 aa).

The interval 53 to 80 is disordered; sequence EQAPPPHRTYLTVPPAPPPSPAEDPTVS.

This Homo sapiens (Human) protein is Myocilin opposite strand protein.